The following is a 727-amino-acid chain: Glucans biosynthesis glucosyltransferase H (727 aa).

The interval 18–38 (SAMPNERPGAMEPQNLSKMPE) is disordered. 7 helical membrane passes run 58 to 78 (FLVV…MGAV), 97 to 117 (VNFC…LILL), 278 to 298 (LQQF…GWWV), 408 to 428 (IMAY…LMLA), 460 to 480 (LFYI…LLLL), 496 to 516 (IFSV…MMFI), and 572 to 592 (LLAW…ISAW).

The protein belongs to the glycosyltransferase 2 family. OpgH subfamily.

Its subcellular location is the cell inner membrane. The protein operates within glycan metabolism; osmoregulated periplasmic glucan (OPG) biosynthesis. Functionally, involved in the biosynthesis of osmoregulated periplasmic glucans (OPGs). This chain is Glucans biosynthesis glucosyltransferase H, found in Shewanella baltica (strain OS223).